The primary structure comprises 228 residues: Response regulator MprA (228 aa).

A Response regulatory domain is found at 2–116 (RILAVDDDRA…ELLARIRALL (115 aa)). Position 46 is a 4-aspartylphosphate (D46). A DNA-binding region (ompR/PhoB-type) is located at residues 127–225 (SVAMSFSDLT…VRGVGYVLRE (99 aa)).

Phosphorylated and dephosphorylated by MprB.

The protein localises to the cytoplasm. Member of the two-component regulatory system MprB/MprA which contributes to maintaining a balance among several systems involved in stress resistance and is required for establishment and maintenance of persistent infection in the host. Functions as a transcriptional regulator that recognizes a 19-bp nucleotide motif comprizing two loosely conserved 8-bp direct DNA-binding motif repeats separated by a 3-bp spacer region. The polypeptide is Response regulator MprA (mprA) (Mycobacterium leprae (strain TN)).